Reading from the N-terminus, the 248-residue chain is 3-deoxy-manno-octulosonate cytidylyltransferase (248 aa).

This sequence belongs to the KdsB family.

It is found in the cytoplasm. The catalysed reaction is 3-deoxy-alpha-D-manno-oct-2-ulosonate + CTP = CMP-3-deoxy-beta-D-manno-octulosonate + diphosphate. The protein operates within nucleotide-sugar biosynthesis; CMP-3-deoxy-D-manno-octulosonate biosynthesis; CMP-3-deoxy-D-manno-octulosonate from 3-deoxy-D-manno-octulosonate and CTP: step 1/1. It functions in the pathway bacterial outer membrane biogenesis; lipopolysaccharide biosynthesis. Its function is as follows. Activates KDO (a required 8-carbon sugar) for incorporation into bacterial lipopolysaccharide in Gram-negative bacteria. The chain is 3-deoxy-manno-octulosonate cytidylyltransferase from Klebsiella pneumoniae (strain 342).